A 467-amino-acid chain; its full sequence is Dimethylamine methyltransferase MtbB2 (467 aa).

A non-standard amino acid (pyrrolysine) is located at residue pyrrolysine 356.

This sequence belongs to the dimethylamine methyltransferase family.

The catalysed reaction is Co(I)-[dimethylamine-specific corrinoid protein] + dimethylamine + H(+) = methyl-Co(III)-[dimethylamine-specific corrinoid protein] + methylamine. It functions in the pathway one-carbon metabolism; methanogenesis from dimethylamine. In terms of biological role, catalyzes the transfer of a methyl group from dimethylamine to the corrinoid cofactor of MtbC. This is Dimethylamine methyltransferase MtbB2 (mtbB2) from Methanosarcina barkeri (strain Fusaro / DSM 804).